The following is a 407-amino-acid chain: Arginine deiminase (407 aa).

Cys397 (amidino-cysteine intermediate) is an active-site residue.

It belongs to the arginine deiminase family.

Its subcellular location is the cytoplasm. It carries out the reaction L-arginine + H2O = L-citrulline + NH4(+). It functions in the pathway amino-acid degradation; L-arginine degradation via ADI pathway; carbamoyl phosphate from L-arginine: step 1/2. The polypeptide is Arginine deiminase (Vibrio cholerae serotype O1 (strain ATCC 39541 / Classical Ogawa 395 / O395)).